Reading from the N-terminus, the 329-residue chain is Deoxyhypusine hydroxylase (329 aa).

4 HEAT-like PBS-type repeats span residues 65-91 (LKHELAYCLGQSGHDAAIAPLRGVLED), 99-124 (RHEAAEALGALSDKGSLELLKKMRDD), 232-258 (FRHEIAFVFGQLSHPASIPSLTEALSN), and 265-292 (VRHEAAEALGSLGDEEGVEETLKKFLND). The Fe cation site is built by His67, Glu68, His100, Glu101, His234, Glu235, His267, and Glu268.

Belongs to the deoxyhypusine hydroxylase family. Fe(2+) serves as cofactor.

The protein resides in the cytoplasm. The protein localises to the nucleus. The enzyme catalyses [eIF5A protein]-deoxyhypusine + AH2 + O2 = [eIF5A protein]-hypusine + A + H2O. Its pathway is protein modification; eIF5A hypusination. In terms of biological role, catalyzes the hydroxylation of the N(6)-(4-aminobutyl)-L-lysine intermediate to form hypusine, an essential post-translational modification only found in mature eIF-5A factor. This is Deoxyhypusine hydroxylase from Phaeosphaeria nodorum (strain SN15 / ATCC MYA-4574 / FGSC 10173) (Glume blotch fungus).